Here is a 326-residue protein sequence, read N- to C-terminus: Septum site-determining protein minD homolog, chloroplastic (326 aa).

The N-terminal 62 residues, 1 to 62 (MASLRLFSTN…LAGETPRIVV (62 aa)), are a transit peptide targeting the chloroplast. 67-74 (KGGVGKTT) is an ATP binding site.

This sequence belongs to the ParA family. MinD subfamily. In terms of assembly, homodimer. Interacts with MINE1. Binds to ARC3. Interacts with MCD1. Interacts with CDP1/PARC6.

Its subcellular location is the plastid. The protein resides in the chloroplast inner membrane. With respect to regulation, stimulated ATPase activity by MINE1. In terms of biological role, together with ARC3 and MCD1, regulates FtsZ ring positioning in chloroplasts in an ARC6-dependent manner. Calcium-dependent ATPase required for the correct placement of the plastid division site. Inhibits FtsZ filament and ring formation in the plastid. Mediates inhibition of plastid division. In cooperation with MINE1, prevents FtsZ ring formation anywhere outside of the mid-plastids. The chain is Septum site-determining protein minD homolog, chloroplastic from Arabidopsis thaliana (Mouse-ear cress).